The primary structure comprises 270 residues: Nodule lectin (270 aa).

Positions 1–33 (MAFYRTNLPTRELFSLVSVVIVLLATNINSVQA) are cleaved as a signal peptide. Residues 34–41 (LSFNFTKL) constitute a propeptide that is removed on maturation. Asn134 carries N-linked (GlcNAc...) asparagine glycosylation.

Belongs to the leguminous lectin family. In terms of processing, glycosylated in a boron-dependent manner. Glycosylation is required for localization to symbiosomes. 3 different glycosylation variants, NLEC-1A, NLEC-1B and NLEC-1C, have been identified. Expressed in nodules of Rhizobium-infected and uninfected roots and in the root stele near the nodule attachment point. In roots which have been colonized by the endomycorrhizal fungus G.versiforme, detected only in cortical cells colonized by the fungus, mainly those containing arbuscules.

Its subcellular location is the symbiosome. The protein resides in the peribacteroid space. It is found in the peribacteroid membrane. Involved in symbiosome development. This Pisum sativum (Garden pea) protein is Nodule lectin (NLEC1).